The primary structure comprises 489 residues: Glycogen synthase (489 aa).

An ADP-alpha-D-glucose-binding site is contributed by arginine 20.

It belongs to the glycosyltransferase 1 family. Bacterial/plant glycogen synthase subfamily.

The enzyme catalyses [(1-&gt;4)-alpha-D-glucosyl](n) + ADP-alpha-D-glucose = [(1-&gt;4)-alpha-D-glucosyl](n+1) + ADP + H(+). It functions in the pathway glycan biosynthesis; glycogen biosynthesis. Its function is as follows. Synthesizes alpha-1,4-glucan chains using ADP-glucose. The protein is Glycogen synthase of Chlorobium chlorochromatii (strain CaD3).